The chain runs to 946 residues: MKPLSSPLQQYRQTVVERLPEPLAEEPLSAQAKSVLTFSDFVQDSIIAHREWLTELESQPPQADEWQHYAAWLQEALSNVSDEAGLMRELRLFRRRIMVRIAWAQTLALVTEESILQQLSYLAETLIVAARDWLYDACCREWGTPCNAQGEAQPLLILGMGKLGGGELNFSSDIDLIFAWPEHGCTQGGRRELDNAQFFTRMGQRLIKVLDQPTQDGFVYRVDMRLRPFGESGPLVLSFAALEDYYQEQGRDWERYAMVKARIMGDSEGVYANELRAMLRPFVFRRYIDFSVIQSLRNMKGMIAREVRRRGLTDNIKLGAGGIREIEFIVQVFQLIRGGREPSLQSCSLLPTLSAIAALHLLSENDAEQLRVAYLFLRRLENLLQSINDEQTQTLPSDELNRARLAWAMDFADWPQLTGALTAHMNNVRRVFNELIGDDESETQEESLSEQWRELWQDALQEDDTTPVLAHLSEDDRKQVLTLISDFRKELDKRTIGPRGRQVLDHLMPHLLSDVCAREDAAVTLSRITALLVGIVTRTTYLELLSEFPAALNHLISLCAASPMIASQLARYPLLLDELLDPNTLYQPTATDAYRDELRQYLLRVPEDDEEQQLEALRQFKQAQLLRIAAADIAGTLPVMKVSDHLTWLAEAMIDAVVQQAWVQMVARYGKPNHLNDREGRGFAVVGYGKLGGWELGYSSDLDLIFLHDCPMDAMTDGEREIDGRQFYLRLAQRIMHLFSTRTSSGILYEVDARLRPSGAAGMLVTSTEAFADYQKNEAWTWEHQALVRARVVYGDPQLTAHFDAVRREIMTLPREGRTLQTEVREMREKMRAHLGNKHRDRFDIKADEGGITDIEFITQYLVLRYAHEKPKLTRWSDNVRILELLAQNDIMEEQEAMALTRAYTTLRDELHHLALQELPGHVSGDCFTAERDLVRASWQKWLVEE.

Positions 1 to 440 (MKPLSSPLQQ…VFNELIGDDE (440 aa)) are adenylyl removase. Positions 449 to 946 (SEQWRELWQD…ASWQKWLVEE (498 aa)) are adenylyl transferase.

Belongs to the GlnE family. It depends on Mg(2+) as a cofactor.

It carries out the reaction [glutamine synthetase]-O(4)-(5'-adenylyl)-L-tyrosine + phosphate = [glutamine synthetase]-L-tyrosine + ADP. The catalysed reaction is [glutamine synthetase]-L-tyrosine + ATP = [glutamine synthetase]-O(4)-(5'-adenylyl)-L-tyrosine + diphosphate. Involved in the regulation of glutamine synthetase GlnA, a key enzyme in the process to assimilate ammonia. When cellular nitrogen levels are high, the C-terminal adenylyl transferase (AT) inactivates GlnA by covalent transfer of an adenylyl group from ATP to specific tyrosine residue of GlnA, thus reducing its activity. Conversely, when nitrogen levels are low, the N-terminal adenylyl removase (AR) activates GlnA by removing the adenylyl group by phosphorolysis, increasing its activity. The regulatory region of GlnE binds the signal transduction protein PII (GlnB) which indicates the nitrogen status of the cell. In Shigella sonnei (strain Ss046), this protein is Bifunctional glutamine synthetase adenylyltransferase/adenylyl-removing enzyme.